A 360-amino-acid polypeptide reads, in one-letter code: Protein Wnt-2 (360 aa).

A signal peptide spans 1 to 25; that stretch reads MNSPLRGIWLWLPLLLTWLTPEVSS. Intrachain disulfides connect Cys76/Cys87, Cys127/Cys135, Cys137/Cys157, Cys206/Cys220, Cys208/Cys215, Cys278/Cys309, Cys294/Cys304, Cys308/Cys348, Cys324/Cys339, Cys326/Cys336, and Cys331/Cys332. Ser212 carries the O-palmitoleoyl serine; by PORCN lipid modification. A glycan (N-linked (GlcNAc...) asparagine) is linked at Asn295.

It belongs to the Wnt family. In terms of processing, palmitoleoylation is required for efficient binding to frizzled receptors. Depalmitoleoylation leads to Wnt signaling pathway inhibition.

It localises to the secreted. The protein resides in the extracellular space. It is found in the extracellular matrix. Its function is as follows. Ligand for members of the frizzled family of seven transmembrane receptors. Probable developmental protein. May be a signaling molecule which affects the development of discrete regions of tissues. Is likely to signal over only few cell diameters. This chain is Protein Wnt-2 (WNT2), found in Ateles geoffroyi (Black-handed spider monkey).